Consider the following 953-residue polypeptide: Serine/threonine-protein kinase ppk30 (953 aa).

In terms of domain architecture, Protein kinase spans 57-326 (VIIQRYLSEG…IYQTLKEIME (270 aa)). Residues 63-71 (LSEGGFSHV) and K85 each bind ATP. D187 serves as the catalytic Proton acceptor. Disordered regions lie at residues 343–402 (ASTY…PSVS), 427–451 (SPIP…RRAD), 538–606 (RFLP…NRMN), 641–669 (RKEP…NKDV), 748–791 (STSQ…RPIG), and 864–953 (RKSC…ESLE). 3 stretches are compositionally biased toward polar residues: residues 355–369 (RTPS…SRPA), 378–402 (TVQT…PSVS), and 433–444 (KSYSATIQTPRS). Residues 547 to 557 (PSEFSSSVGSK) show a composition bias toward low complexity. Over residues 558–575 (QNLSMDIPSVQNVSTKQK) the composition is skewed to polar residues. Residues 656–669 (LKKDQSSEVANKDV) are compositionally biased toward basic and acidic residues. Residues 748–766 (STSQVSHTQRLQQSISTSL) show a composition bias toward polar residues. Composition is skewed to basic and acidic residues over residues 767-778 (ERVKSNTKKESN), 865-884 (KSCE…DLER), and 937-953 (PHIE…ESLE). 2 positions are modified to phosphoserine: S872 and S875.

Belongs to the protein kinase superfamily. Ser/Thr protein kinase family.

It is found in the cytoplasm. It catalyses the reaction L-seryl-[protein] + ATP = O-phospho-L-seryl-[protein] + ADP + H(+). It carries out the reaction L-threonyl-[protein] + ATP = O-phospho-L-threonyl-[protein] + ADP + H(+). This is Serine/threonine-protein kinase ppk30 (ppk30) from Schizosaccharomyces pombe (strain 972 / ATCC 24843) (Fission yeast).